A 216-amino-acid polypeptide reads, in one-letter code: Somatotropin (216 aa).

The signal sequence occupies residues 1-26 (MAAGPRTSMLLAFALLCLPWTQEVGA). His45 is a Zn(2+) binding site. Cys78 and Cys189 form a disulfide bridge. Ser131 is modified (phosphoserine). Glu198 contacts Zn(2+). Cys206 and Cys214 form a disulfide bridge.

The protein belongs to the somatotropin/prolactin family.

It localises to the secreted. Plays an important role in growth control. Its major role in stimulating body growth is to stimulate the liver and other tissues to secrete IGF1. It stimulates both the differentiation and proliferation of myoblasts. It also stimulates amino acid uptake and protein synthesis in muscle and other tissues. The sequence is that of Somatotropin (GH1) from Balaenoptera physalus (Fin whale).